The chain runs to 611 residues: Zinc metalloproteinase-disintegrin-like MTP9 (611 aa).

A signal peptide spans 1-20; sequence MIEVLLVTICFTVFPYQGSS. Residues 21-191 constitute a propeptide that is removed on maturation; sequence IILESGNVND…DEPIEKISQL (171 aa). The region spanning 205–401 is the Peptidase M12B domain; sequence KYIELYVVVD…VRPQCILNKP (197 aa). Glu-208 contributes to the Ca(2+) binding site. N-linked (GlcNAc...) asparagine glycosylation is present at Asn-282. Asp-292 lines the Ca(2+) pocket. 3 disulfide bridges follow: Cys-316/Cys-396, Cys-356/Cys-380, and Cys-358/Cys-363. The Zn(2+) site is built by His-341, His-345, and His-351. 7 residues coordinate Ca(2+): Cys-396, Asn-399, Asn-414, Phe-416, Glu-418, Glu-421, and Asp-424. In terms of domain architecture, Disintegrin spans 409 to 493; that stretch reads PPVCGNYFVE…ECPTDSFQRN (85 aa). Disulfide bonds link Cys-412–Cys-441, Cys-423–Cys-436, Cys-425–Cys-431, Cys-435–Cys-456, Cys-447–Cys-453, Cys-452–Cys-478, Cys-465–Cys-485, Cys-472–Cys-504, Cys-497–Cys-509, Cys-516–Cys-566, Cys-531–Cys-573, Cys-541–Cys-575, Cys-544–Cys-554, Cys-561–Cys-599, and Cys-593–Cys-604. The short motif at 471-473 is the D/ECD-tripeptide element; that stretch reads DCD. Ca(2+)-binding residues include Asp-473, Leu-474, Glu-476, and Asp-488. Residues Asn-548 and Asn-570 are each glycosylated (N-linked (GlcNAc...) asparagine).

Belongs to the venom metalloproteinase (M12B) family. P-III subfamily. As to quaternary structure, monomer. Zn(2+) is required as a cofactor. In terms of tissue distribution, expressed by the venom gland.

The protein resides in the secreted. Snake venom zinc metalloproteinase that may impair hemostasis in the prey. This chain is Zinc metalloproteinase-disintegrin-like MTP9, found in Drysdalia coronoides (White-lipped snake).